The following is a 149-amino-acid chain: Large ribosomal subunit protein uL15 (149 aa).

2 stretches are compositionally biased toward basic residues: residues 1–14 (MPTRFSKTRKHRGH) and 21–30 (RVGKHRKHPG). Residues 1–43 (MPTRFSKTRKHRGHVSAGKGRVGKHRKHPGGRGMAGGQHHHRT) form a disordered region.

The protein belongs to the universal ribosomal protein uL15 family. As to quaternary structure, component of the large ribosomal subunit (LSU). Mature N.crassa ribosomes consist of a small (40S) and a large (60S) subunit. The 40S small subunit contains 1 molecule of ribosomal RNA (18S rRNA) and at least 32 different proteins. The large 60S subunit contains 3 rRNA molecules (26S, 5.8S and 5S rRNA) and at least 42 different proteins.

Its subcellular location is the cytoplasm. Its function is as follows. Component of the ribosome, a large ribonucleoprotein complex responsible for the synthesis of proteins in the cell. The small ribosomal subunit (SSU) binds messenger RNAs (mRNAs) and translates the encoded message by selecting cognate aminoacyl-transfer RNA (tRNA) molecules. The large subunit (LSU) contains the ribosomal catalytic site termed the peptidyl transferase center (PTC), which catalyzes the formation of peptide bonds, thereby polymerizing the amino acids delivered by tRNAs into a polypeptide chain. The nascent polypeptides leave the ribosome through a tunnel in the LSU and interact with protein factors that function in enzymatic processing, targeting, and the membrane insertion of nascent chains at the exit of the ribosomal tunnel. This is Large ribosomal subunit protein uL15 (rpl-28) from Neurospora crassa (strain ATCC 24698 / 74-OR23-1A / CBS 708.71 / DSM 1257 / FGSC 987).